The primary structure comprises 620 residues: Chaperone protein HscA homolog (620 aa).

It belongs to the heat shock protein 70 family.

Chaperone involved in the maturation of iron-sulfur cluster-containing proteins. Has a low intrinsic ATPase activity which is markedly stimulated by HscB. In Janthinobacterium sp. (strain Marseille) (Minibacterium massiliensis), this protein is Chaperone protein HscA homolog.